The following is a 1790-amino-acid chain: Intracellular protein transport protein USO1 (1790 aa).

The globular head stretch occupies residues 1-724 (MDIIQGLIQQ…LSHDPDEEPI (724 aa)). ARM repeat units follow at residues 45–89 (AFSR…LFIR), 127–170 (QFSL…AVMA), 173–213 (PLKA…MAVV), 215–260 (DSPH…NILK), 261–312 (YNTS…VSLT), 314–362 (EPGN…NMVR), 363–429 (SNEH…LKAY), 431–512 (MDNF…PFKL), 543–584 (GNDL…LIYW), and 586–630 (FGDF…LGVA). The tract at residues 452-484 (TNNVGDNAKENGGSNKSDKESDSDKDTDGKDGT) is disordered. The segment at 465 to 487 (SNKSDKESDSDKDTDGKDGTEYE) is charged (hyper-hydrophilic). Positions 467–484 (KSDKESDSDKDTDGKDGT) are enriched in basic and acidic residues. A coiled-coil region spans residues 725–1790 (NKISFEEVEK…EEDEEEGQVA (1066 aa)). The interval 991-1790 (ESSIQLSNLQ…EEDEEEGQVA (800 aa)) is dispensable for the protein function. 6 disordered regions span residues 1185 to 1221 (EITSTQQENESIKKKNDELEGEVKAMKSTSEEQSNLK), 1326 to 1351 (KEKSESELSRLKKTSSEERKNAEEQL), 1485 to 1547 (GLKK…EDIK), 1645 to 1667 (QELDSTQQKAQKSEEERRAEVRK), 1722 to 1742 (DNLKAENSKLKEANEDRSEID), and 1762 to 1790 (LKDLGVEISSDEEDDEEDDEEDEEEGQVA). Over residues 1194–1209 (ESIKKKNDELEGEVKA) the composition is skewed to basic and acidic residues. Composition is skewed to basic and acidic residues over residues 1485–1512 (GLKKLEEESSKEKAELEKSKEMMKKLES), 1519–1547 (TELKSSMETIRKSDEKLEQSKKSAEEDIK), 1655–1667 (QKSEEERRAEVRK), and 1722–1738 (DNLKAENSKLKEANEDR). Ser1770 carries the phosphoserine modification. Residues 1770-1790 (SSDEEDDEEDDEEDEEEGQVA) are compositionally biased toward acidic residues.

The protein belongs to the VDP/USO1/EDE1 family. In terms of assembly, homodimer. Dimerizes by parallel association of the tails, resulting in an elongated structure with two globular head domains side by side, and a long rod-like tail structure.

It is found in the cytoplasm. The protein resides in the cytoskeleton. It localises to the cytoplasmic vesicle membrane. Its subcellular location is the endoplasmic reticulum membrane. The protein localises to the golgi apparatus membrane. Required for protein transport from the ER to the Golgi complex. This is Intracellular protein transport protein USO1 (USO1) from Saccharomyces cerevisiae (strain ATCC 204508 / S288c) (Baker's yeast).